Reading from the N-terminus, the 295-residue chain is Pyridoxal 5'-phosphate synthase subunit PdxS (295 aa).

Aspartate 25 lines the D-ribose 5-phosphate pocket. The active-site Schiff-base intermediate with D-ribose 5-phosphate is the lysine 82. Residue glycine 154 participates in D-ribose 5-phosphate binding. D-glyceraldehyde 3-phosphate is bound at residue arginine 166. Residues glycine 215 and 236 to 237 contribute to the D-ribose 5-phosphate site; that span reads GS.

The protein belongs to the PdxS/SNZ family. In terms of assembly, in the presence of PdxT, forms a dodecamer of heterodimers.

It catalyses the reaction aldehydo-D-ribose 5-phosphate + D-glyceraldehyde 3-phosphate + L-glutamine = pyridoxal 5'-phosphate + L-glutamate + phosphate + 3 H2O + H(+). It participates in cofactor biosynthesis; pyridoxal 5'-phosphate biosynthesis. Catalyzes the formation of pyridoxal 5'-phosphate from ribose 5-phosphate (RBP), glyceraldehyde 3-phosphate (G3P) and ammonia. The ammonia is provided by the PdxT subunit. Can also use ribulose 5-phosphate and dihydroxyacetone phosphate as substrates, resulting from enzyme-catalyzed isomerization of RBP and G3P, respectively. The sequence is that of Pyridoxal 5'-phosphate synthase subunit PdxS from Shouchella clausii (strain KSM-K16) (Alkalihalobacillus clausii).